The following is a 491-amino-acid chain: Glutamyl-tRNA(Gln) amidotransferase subunit A (491 aa).

The active-site Charge relay system is the Ser158. Ser182 functions as the Acyl-ester intermediate in the catalytic mechanism.

It belongs to the amidase family. GatA subfamily. As to quaternary structure, heterotrimer of A, B and C subunits.

The catalysed reaction is L-glutamyl-tRNA(Gln) + L-glutamine + ATP + H2O = L-glutaminyl-tRNA(Gln) + L-glutamate + ADP + phosphate + H(+). Allows the formation of correctly charged Gln-tRNA(Gln) through the transamidation of misacylated Glu-tRNA(Gln) in organisms which lack glutaminyl-tRNA synthetase. The reaction takes place in the presence of glutamine and ATP through an activated gamma-phospho-Glu-tRNA(Gln). The protein is Glutamyl-tRNA(Gln) amidotransferase subunit A of Bradyrhizobium diazoefficiens (strain JCM 10833 / BCRC 13528 / IAM 13628 / NBRC 14792 / USDA 110).